The primary structure comprises 509 residues: UDP-N-acetylmuramyl-tripeptide synthetase (509 aa).

Ser30 contributes to the UDP-N-acetyl-alpha-D-muramoyl-L-alanyl-D-glutamate binding site. 111-117 provides a ligand contact to ATP; sequence GTDGKTT. UDP-N-acetyl-alpha-D-muramoyl-L-alanyl-D-glutamate is bound by residues 155 to 156, Thr182, and Arg192; that span reads ST. Lys224 carries the N6-carboxylysine modification.

This sequence belongs to the MurCDEF family. MurE subfamily. Carboxylation is probably crucial for Mg(2+) binding and, consequently, for the gamma-phosphate positioning of ATP.

The protein localises to the cytoplasm. Its pathway is cell wall biogenesis; peptidoglycan biosynthesis. Its function is as follows. Catalyzes the addition of an amino acid to the nucleotide precursor UDP-N-acetylmuramoyl-L-alanyl-D-glutamate (UMAG) in the biosynthesis of bacterial cell-wall peptidoglycan. This chain is UDP-N-acetylmuramyl-tripeptide synthetase, found in Roseiflexus sp. (strain RS-1).